The chain runs to 678 residues: DNA ligase (678 aa).

NAD(+) contacts are provided by residues 35 to 39 (DEEYD), 84 to 85 (SL), and Glu-115. The N6-AMP-lysine intermediate role is filled by Lys-117. NAD(+)-binding residues include Arg-138, Glu-172, Lys-288, and Lys-312. Zn(2+)-binding residues include Cys-406, Cys-409, Cys-425, and Cys-430. One can recognise a BRCT domain in the interval 589–678 (VQSKILSNLT…IKNLRQQKLF (90 aa)).

It belongs to the NAD-dependent DNA ligase family. LigA subfamily. Requires Mg(2+) as cofactor. It depends on Mn(2+) as a cofactor.

The enzyme catalyses NAD(+) + (deoxyribonucleotide)n-3'-hydroxyl + 5'-phospho-(deoxyribonucleotide)m = (deoxyribonucleotide)n+m + AMP + beta-nicotinamide D-nucleotide.. In terms of biological role, DNA ligase that catalyzes the formation of phosphodiester linkages between 5'-phosphoryl and 3'-hydroxyl groups in double-stranded DNA using NAD as a coenzyme and as the energy source for the reaction. It is essential for DNA replication and repair of damaged DNA. This Pseudothermotoga lettingae (strain ATCC BAA-301 / DSM 14385 / NBRC 107922 / TMO) (Thermotoga lettingae) protein is DNA ligase.